The sequence spans 108 residues: uncharacterized protein (108 aa).

The chain crosses the membrane as a helical span at residues 64 to 84; that stretch reads LFIIYYYYYLLICLSPHFFPI.

The protein resides in the membrane. This is an uncharacterized protein from Schizosaccharomyces pombe (strain 972 / ATCC 24843) (Fission yeast).